Reading from the N-terminus, the 467-residue chain is Uronate isomerase (467 aa).

The protein belongs to the metallo-dependent hydrolases superfamily. Uronate isomerase family.

The enzyme catalyses D-glucuronate = D-fructuronate. It carries out the reaction aldehydo-D-galacturonate = keto-D-tagaturonate. It participates in carbohydrate metabolism; pentose and glucuronate interconversion. The protein is Uronate isomerase of Mannheimia succiniciproducens (strain KCTC 0769BP / MBEL55E).